We begin with the raw amino-acid sequence, 404 residues long: Exodeoxyribonuclease 7 large subunit (404 aa).

It belongs to the XseA family. In terms of assembly, heterooligomer composed of large and small subunits.

Its subcellular location is the cytoplasm. The catalysed reaction is Exonucleolytic cleavage in either 5'- to 3'- or 3'- to 5'-direction to yield nucleoside 5'-phosphates.. In terms of biological role, bidirectionally degrades single-stranded DNA into large acid-insoluble oligonucleotides, which are then degraded further into small acid-soluble oligonucleotides. The chain is Exodeoxyribonuclease 7 large subunit from Fusobacterium nucleatum subsp. nucleatum (strain ATCC 25586 / DSM 15643 / BCRC 10681 / CIP 101130 / JCM 8532 / KCTC 2640 / LMG 13131 / VPI 4355).